Here is a 208-residue protein sequence, read N- to C-terminus: FMN-dependent NADH:quinone oxidoreductase (208 aa).

FMN is bound by residues His-10, 17–19 (SRS), 104–107 (MWNL), 148–153 (SNGGFY), and Asp-184.

The protein belongs to the azoreductase type 1 family. Homodimer. It depends on FMN as a cofactor.

The catalysed reaction is 2 a quinone + NADH + H(+) = 2 a 1,4-benzosemiquinone + NAD(+). It catalyses the reaction N,N-dimethyl-1,4-phenylenediamine + anthranilate + 2 NAD(+) = 2-(4-dimethylaminophenyl)diazenylbenzoate + 2 NADH + 2 H(+). In terms of biological role, quinone reductase that provides resistance to thiol-specific stress caused by electrophilic quinones. Functionally, also exhibits azoreductase activity. Catalyzes the reductive cleavage of the azo bond in aromatic azo compounds to the corresponding amines. Requires NADH, but not NADPH, as an electron donor for its activity. The enzyme can also reduce a wide range of sulfonated azo dyes. The substrate preference order is methyl Red &gt; Orange II &gt; Ponceau BS &gt; Ponceau S &gt; Orange G &gt; Amaranth. This is FMN-dependent NADH:quinone oxidoreductase from Enterococcus faecalis (strain ATCC 700802 / V583).